A 124-amino-acid chain; its full sequence is Small ribosomal subunit protein uS12 (124 aa).

Aspartate 89 carries the 3-methylthioaspartic acid modification. The segment at threonine 104–glutamate 124 is disordered.

Belongs to the universal ribosomal protein uS12 family. In terms of assembly, part of the 30S ribosomal subunit. Contacts proteins S8 and S17. May interact with IF1 in the 30S initiation complex.

With S4 and S5 plays an important role in translational accuracy. Its function is as follows. Interacts with and stabilizes bases of the 16S rRNA that are involved in tRNA selection in the A site and with the mRNA backbone. Located at the interface of the 30S and 50S subunits, it traverses the body of the 30S subunit contacting proteins on the other side and probably holding the rRNA structure together. The combined cluster of proteins S8, S12 and S17 appears to hold together the shoulder and platform of the 30S subunit. The sequence is that of Small ribosomal subunit protein uS12 from Parasynechococcus marenigrum (strain WH8102).